The sequence spans 145 residues: MRVVLQRVKEASVTVEGTVAGQIDQGFLLLVGVTHDDTLEQVNWLADKIAGLRVFEDEEERMNRSLQDVEGKILSVSQFTLYGDVKKGRRPAFTEAAKPDVANELYEAFNARLRQQGIIVETGQFGAMMDVALVNDGPVTLILEK.

The Gly-cisPro motif, important for rejection of L-amino acids motif lies at 137–138; sequence GP.

This sequence belongs to the DTD family. In terms of assembly, homodimer.

It is found in the cytoplasm. It carries out the reaction glycyl-tRNA(Ala) + H2O = tRNA(Ala) + glycine + H(+). The enzyme catalyses a D-aminoacyl-tRNA + H2O = a tRNA + a D-alpha-amino acid + H(+). Functionally, an aminoacyl-tRNA editing enzyme that deacylates mischarged D-aminoacyl-tRNAs. Also deacylates mischarged glycyl-tRNA(Ala), protecting cells against glycine mischarging by AlaRS. Acts via tRNA-based rather than protein-based catalysis; rejects L-amino acids rather than detecting D-amino acids in the active site. By recycling D-aminoacyl-tRNA to D-amino acids and free tRNA molecules, this enzyme counteracts the toxicity associated with the formation of D-aminoacyl-tRNA entities in vivo and helps enforce protein L-homochirality. The sequence is that of D-aminoacyl-tRNA deacylase from Exiguobacterium sibiricum (strain DSM 17290 / CCUG 55495 / CIP 109462 / JCM 13490 / 255-15).